The primary structure comprises 264 residues: uncharacterized protein (264 aa).

This is an uncharacterized protein from Shigella flexneri.